Here is a 223-residue protein sequence, read N- to C-terminus: Phosphoribosylformylglycinamidine synthase subunit PurQ (223 aa).

A Glutamine amidotransferase type-1 domain is found at 2–223 (KTAIIQLPGL…FQSALELAKG (222 aa)). Cysteine 86 acts as the Nucleophile in catalysis. Catalysis depends on residues histidine 196 and glutamate 198.

As to quaternary structure, part of the FGAM synthase complex composed of 1 PurL, 1 PurQ and 2 PurS subunits.

The protein resides in the cytoplasm. It carries out the reaction N(2)-formyl-N(1)-(5-phospho-beta-D-ribosyl)glycinamide + L-glutamine + ATP + H2O = 2-formamido-N(1)-(5-O-phospho-beta-D-ribosyl)acetamidine + L-glutamate + ADP + phosphate + H(+). It catalyses the reaction L-glutamine + H2O = L-glutamate + NH4(+). The protein operates within purine metabolism; IMP biosynthesis via de novo pathway; 5-amino-1-(5-phospho-D-ribosyl)imidazole from N(2)-formyl-N(1)-(5-phospho-D-ribosyl)glycinamide: step 1/2. Part of the phosphoribosylformylglycinamidine synthase complex involved in the purines biosynthetic pathway. Catalyzes the ATP-dependent conversion of formylglycinamide ribonucleotide (FGAR) and glutamine to yield formylglycinamidine ribonucleotide (FGAM) and glutamate. The FGAM synthase complex is composed of three subunits. PurQ produces an ammonia molecule by converting glutamine to glutamate. PurL transfers the ammonia molecule to FGAR to form FGAM in an ATP-dependent manner. PurS interacts with PurQ and PurL and is thought to assist in the transfer of the ammonia molecule from PurQ to PurL. The polypeptide is Phosphoribosylformylglycinamidine synthase subunit PurQ (Bartonella henselae (strain ATCC 49882 / DSM 28221 / CCUG 30454 / Houston 1) (Rochalimaea henselae)).